Consider the following 423-residue polypeptide: Voltage-dependent calcium channel gamma-8 subunit (423 aa).

Helical transmembrane passes span 19-39 (VQVL…TIAI), 127-147 (SSIF…CVAA), 157-177 (IILG…IGVI), and 207-227 (FGGL…NIYI). Phosphoserine is present on residues serine 251 and serine 254. Residues 271–304 (RRSRSSSRGSSEASPSRDASPGGPGGPGFASTDI) are disordered. Residues 276-287 (SSRGSSEASPSR) show a composition bias toward low complexity. A helical transmembrane segment spans residues 318–338 (VAAGLASAGGGGSGAGVGAYG). Disordered stretches follow at residues 342–363 (GAAG…GFLT) and 378–423 (VTVT…TTPV). A compositionally biased stretch (pro residues) spans 384–399 (PAAPAPAPAPPAPAAP). Residues 410 to 423 (ASNTNTLNRKTTPV) show a composition bias toward polar residues.

This sequence belongs to the PMP-22/EMP/MP20 family. CACNG subfamily. In terms of assembly, interacts with CACNA1C. Identified in a complex with the L-type calcium channel subunits CACNA1C, CACNA2D1 and either CACNB1 or CACNB2. Acts as an auxiliary subunit for AMPA-selective glutamate receptors (AMPARs). Found in a complex with GRIA1, GRIA2, GRIA3, GRIA4, CNIH2, CNIH3, CACNG2, CACNG3, CACNG4, CACNG5 and CACNG7. Interacts with CNIH2. Found in a complex with GRIA1, GRIA2, GRIA3, GRIA4, DLG4 and CNIH2. Post-translationally, palmitoylated. Probably palmitoylated by ZDHHC3 and ZDHHC7.

It localises to the cell membrane. Its subcellular location is the postsynaptic density membrane. In terms of biological role, regulates the activity of L-type calcium channels that contain CACNA1C as pore-forming subunit. Regulates the trafficking and gating properties of AMPA-selective glutamate receptors (AMPARs). Promotes their targeting to the cell membrane and synapses and modulates their gating properties by slowing their rates of activation, deactivation and desensitization and by mediating their resensitization. Does not show subunit-specific AMPA receptor regulation and regulates all AMPAR subunits. Thought to stabilize the calcium channel in an inactivated (closed) state. The polypeptide is Voltage-dependent calcium channel gamma-8 subunit (Mus musculus (Mouse)).